The primary structure comprises 318 residues: Dehydration-responsive element-binding protein 2E (318 aa).

Over residues 1–15 the composition is skewed to basic residues; sequence MESYGRKRAWKKGPT. The segment at 1–24 is disordered; it reads MESYGRKRAWKKGPTRGKGGPQNA. The segment at residues 27–84 is a DNA-binding region (AP2/ERF); it reads EYRGVRQRTWGKWVAEIREPNKRTRLWLGSFATAEEAALAYDEAARRLYGPDAFLNLP. Residues 140 to 178 are disordered; it reads ELKNSSSSPTKPPPRTPTRANPPPPPLPTSSPCSTVTNS. Residues 149-168 are compositionally biased toward pro residues; the sequence is TKPPPRTPTRANPPPPPLPT.

It belongs to the AP2/ERF transcription factor family. ERF subfamily.

The protein localises to the nucleus. Its function is as follows. Probable transcriptional activator that binds to the DNA sequence 5'-[AG]CCGAC-3' of the cis-acting dehydration-responsive element (DRE). This chain is Dehydration-responsive element-binding protein 2E (DREB2E), found in Oryza sativa subsp. japonica (Rice).